The sequence spans 1348 residues: Kinesin-like protein KIF7 (1348 aa).

One can recognise a Kinesin motor domain in the interval 15–349; it reads PVRVALRVRP…LNYASRAQNI (335 aa). Residue 94-101 participates in ATP binding; it reads GQTGSGKT. Residues 358 to 479 form an interaction with DLG5 region; it reads HPEAERVPEE…EDQAAQGTSG (122 aa). Positions 358 to 1211 are interaction with SMO; sequence HPEAERVPEE…LGRHMWINQE (854 aa). 2 disordered regions span residues 451-486 and 607-674; these read RSTLSSASGPDSGIESAPAEDQAAQGTSGRKGDEGT and AQAD…VCPE. Positions 480 to 542 form a coiled coil; it reads RKGDEGTQQL…ELRLRLELAQ (63 aa). Over residues 620–636 the composition is skewed to acidic residues; the sequence is SEEEGEEEEEEEEEEEE. Coiled coils occupy residues 698–1057 and 1109–1211; these read APAA…IEAL and FDKV…INQE. Ser-903 carries the post-translational modification Phosphoserine. 2 disordered regions span residues 1288–1314 and 1328–1348; these read LCSEQGSSEESRVRETTEPPVGRVLPM and KPRWEPRRTSPGMIDVRKNPL.

Belongs to the TRAFAC class myosin-kinesin ATPase superfamily. Kinesin family. In terms of assembly, can form homodimers and interacts with microtubules. Interacts with GLI1 and SMO. Interacts with GLI2, GLI3 and SUFU. Interacts with NPHP1. Interacts with SMO and DLG5 (via PDZ4 or guanylate kinase-like domain). In terms of processing, polyubiquitinated by UBR3. In terms of tissue distribution, expressed in heart, lung, liver, kidney, testis, spleen and cerebellum.

It localises to the cell projection. The protein resides in the cilium. Its subcellular location is the cytoplasm. It is found in the cytoskeleton. The protein localises to the cilium basal body. Functionally, essential for hedgehog signaling regulation: acts both as a negative and a positive regulator of sonic hedgehog (Shh) and Indian hedgehog (Ihh) pathways, acting downstream of SMO, through both SUFU-dependent and -independent mechanisms. Involved in the regulation of microtubular dynamics. Required for proper organization of the ciliary tip and control of ciliary localization of SUFU-GLI2 complexes. Required for localization of GLI3 to cilia in response to Shh. Negatively regulates Shh signaling by preventing inappropriate activation of the transcriptional activator GLI2 in the absence of ligand. Positively regulates Shh signaling by preventing the processing of the transcription factor GLI3 into its repressor form. In keratinocytes, promotes the dissociation of SUFU-GLI2 complexes, GLI2 nuclear translocation and Shh signaling activation. Involved in the regulation of epidermal differentiation and chondrocyte development. The sequence is that of Kinesin-like protein KIF7 (Kif7) from Mus musculus (Mouse).